A 587-amino-acid polypeptide reads, in one-letter code: Kelch-like protein 3 (587 aa).

The interval 1-24 (MEGESVKPSPQPTAQAEDEEKNRR) is disordered. The BTB domain maps to 50 to 117 (CDVMIVAEDV…IYTAEIEVTE (68 aa)). Residues 152–254 (CLGIRAFADV…PRDYLVQTVE (103 aa)) form the BACK domain. Position 295 is a phosphothreonine (Thr-295). Kelch repeat units follow at residues 302 to 347 (VMIV…FMAG), 348 to 394 (HVYA…VLND), 396 to 441 (LYAV…VVEG), 442 to 490 (KLYA…VLSG), 491 to 537 (QLYA…AVNG), and 539 to 585 (LYVV…VIHK). Phosphothreonine is present on Thr-375. Ser-376 and Ser-433 each carry phosphoserine.

Belongs to the KLHL3 family. As to quaternary structure, homodimer. Component of the BCR(KLHL3) E3 ubiquitin ligase complex, at least composed of CUL3 and KLHL3 and RBX1. Interacts with CLDN8. Post-translationally, phosphorylation at Ser-433 by PKA or PKC decreases the interaction with WNK1 and WNK4, leading to inhibit their degradation by the BCR(KLHL3) complex. Phosphorylated at Ser-433 by PKC in response to angiotensin II signaling, decreasing ability to promote degradation of WNK1 and WNK4, leading to activation of Na-Cl cotransporter SLC12A3/NCC. Phosphorylation at Ser-433 is increased by insulin. Dephosphorylated at Ser-433 by calcineurin PPP3CA, promoting degradation of WNK1 and WNK4. Present at high level in brain and kidney (at protein level). Weakly expressed in other tissues. In kidney, predominantly localizes to the distal convoluted tubule (DCT) and collecting duct, with apical localization in the DCT (at protein level).

Its subcellular location is the cytoplasm. The protein resides in the cytosol. The protein localises to the cytoskeleton. It functions in the pathway protein modification; protein ubiquitination. Substrate-specific adapter of a BCR (BTB-CUL3-RBX1) E3 ubiquitin ligase complex that acts as a regulator of ion transport in the distal nephron. The BCR(KLHL3) complex acts by mediating ubiquitination and degradation of WNK1 and WNK4, two activators of Na-Cl cotransporter SLC12A3/NCC in distal convoluted tubule cells of kidney, thereby regulating NaCl reabsorption. The BCR(KLHL3) complex also mediates ubiquitination of CLDN8, a tight-junction protein required for paracellular chloride transport in the kidney, leading to its degradation. The protein is Kelch-like protein 3 of Mus musculus (Mouse).